A 430-amino-acid polypeptide reads, in one-letter code: Histidine--tRNA ligase (430 aa).

It belongs to the class-II aminoacyl-tRNA synthetase family. As to quaternary structure, homodimer.

The protein resides in the cytoplasm. The enzyme catalyses tRNA(His) + L-histidine + ATP = L-histidyl-tRNA(His) + AMP + diphosphate + H(+). This chain is Histidine--tRNA ligase, found in Acinetobacter baumannii (strain ACICU).